A 430-amino-acid polypeptide reads, in one-letter code: MRTLNRVFAILSDLRLAIALLLLIAAASAVGTILPQQEAPELYLERFNADPWLGLINGDQMLAFQLDHLYSSVWFLALLAWLGLALMLCSWRRQWPALQAAMRWIDYTRPRQLSKLALAETLSCASSDGALSSLAIELKSRGWQVKQHQDRLAARRGVVGRVGPLLVHTGLVLLLIGAAWGALAGQRLERFLAPGRSLDLLDPAGANRLSLTLENFSITRDPAGRAEQFQSTLTLSPPGQEDERRTISVNHPLRYQGMTVYQADWSLAAVTVQIGKSPMLQLPLSTFPELGDQVWGLVLPTRPDGSEPVFLSTSSEQGPVQVFGSDGALITNLRPGGEGTEVRGLPLKVIDILPASGLLLKRDPGVPLVYAGFAITLLGGALSMVATRQIWVISDAVHQRLHIGGLCNRNLLGFAAELPELINRVDVSHG.

A run of 3 helical transmembrane segments spans residues 14 to 34, 72 to 92, and 162 to 182; these read LRLA…GTIL, SVWF…CSWR, and VGPL…AWGA.

The protein belongs to the Ccs1/CcsB family. As to quaternary structure, may interact with CcsA.

It is found in the cellular thylakoid membrane. Functionally, required during biogenesis of c-type cytochromes (cytochrome c6 and cytochrome f) at the step of heme attachment. This Synechococcus sp. (strain WH7803) protein is Cytochrome c biogenesis protein CcsB.